We begin with the raw amino-acid sequence, 356 residues long: Dihydroorotate dehydrogenase (quinone) (356 aa).

FMN-binding positions include 68 to 72 and T92; that span reads AGFDK. K72 contributes to the substrate binding site. 117 to 121 contributes to the substrate binding site; sequence NRMGF. Positions 145 and 178 each coordinate FMN. Residue N178 coordinates substrate. The active-site Nucleophile is S181. N183 contacts substrate. Residues K214 and T242 each coordinate FMN. 243 to 244 contributes to the substrate binding site; sequence NT. Residues G266, G295, and 316-317 each bind FMN; that span reads YT.

It belongs to the dihydroorotate dehydrogenase family. Type 2 subfamily. Monomer. Requires FMN as cofactor.

The protein localises to the cell membrane. It catalyses the reaction (S)-dihydroorotate + a quinone = orotate + a quinol. It participates in pyrimidine metabolism; UMP biosynthesis via de novo pathway; orotate from (S)-dihydroorotate (quinone route): step 1/1. Catalyzes the conversion of dihydroorotate to orotate with quinone as electron acceptor. This is Dihydroorotate dehydrogenase (quinone) from Mycobacterium sp. (strain KMS).